Reading from the N-terminus, the 371-residue chain is Tetraacyldisaccharide 4'-kinase (371 aa).

Residue A63 to T70 coordinates ATP.

It belongs to the LpxK family.

The enzyme catalyses a lipid A disaccharide + ATP = a lipid IVA + ADP + H(+). Its pathway is glycolipid biosynthesis; lipid IV(A) biosynthesis; lipid IV(A) from (3R)-3-hydroxytetradecanoyl-[acyl-carrier-protein] and UDP-N-acetyl-alpha-D-glucosamine: step 6/6. In terms of biological role, transfers the gamma-phosphate of ATP to the 4'-position of a tetraacyldisaccharide 1-phosphate intermediate (termed DS-1-P) to form tetraacyldisaccharide 1,4'-bis-phosphate (lipid IVA). This chain is Tetraacyldisaccharide 4'-kinase, found in Anaeromyxobacter sp. (strain Fw109-5).